A 762-amino-acid chain; its full sequence is 5-methyltetrahydropteroyltriglutamate--homocysteine methyltransferase (762 aa).

5-methyltetrahydropteroyltri-L-glutamate contacts are provided by residues 17-20 (REWK) and Lys111. L-homocysteine contacts are provided by residues 435–437 (IGS) and Glu488. Residues 435-437 (IGS) and Glu488 contribute to the L-methionine site. 5-methyltetrahydropteroyltri-L-glutamate contacts are provided by residues 519–520 (RC) and Trp565. An L-homocysteine-binding site is contributed by Asp603. Asp603 contacts L-methionine. Residue Glu609 participates in 5-methyltetrahydropteroyltri-L-glutamate binding. Residues His645, Cys647, and Glu669 each contribute to the Zn(2+) site. His698 (proton donor) is an active-site residue. A Zn(2+)-binding site is contributed by Cys730.

Belongs to the vitamin-B12 independent methionine synthase family. Zn(2+) serves as cofactor.

The enzyme catalyses 5-methyltetrahydropteroyltri-L-glutamate + L-homocysteine = tetrahydropteroyltri-L-glutamate + L-methionine. It participates in amino-acid biosynthesis; L-methionine biosynthesis via de novo pathway; L-methionine from L-homocysteine (MetE route): step 1/1. Functionally, catalyzes the transfer of a methyl group from 5-methyltetrahydrofolate to homocysteine resulting in methionine formation. The sequence is that of 5-methyltetrahydropteroyltriglutamate--homocysteine methyltransferase from Bacillus cereus (strain ATCC 14579 / DSM 31 / CCUG 7414 / JCM 2152 / NBRC 15305 / NCIMB 9373 / NCTC 2599 / NRRL B-3711).